Consider the following 277-residue polypeptide: Glycerol-3-phosphate acyltransferase (277 aa).

5 helical membrane passes run Leu-3 to Val-23, Ile-55 to Leu-75, Pro-79 to Phe-99, Ile-111 to Leu-131, and Leu-155 to Leu-175. Positions Ser-207–Glu-277 are disordered. Positions Phe-216 to Lys-239 are enriched in basic and acidic residues. 2 stretches are compositionally biased toward basic residues: residues Lys-240 to Thr-253 and Lys-262 to Lys-271.

The protein belongs to the PlsY family. Probably interacts with PlsX.

The protein resides in the cell inner membrane. It catalyses the reaction an acyl phosphate + sn-glycerol 3-phosphate = a 1-acyl-sn-glycero-3-phosphate + phosphate. The protein operates within lipid metabolism; phospholipid metabolism. Catalyzes the transfer of an acyl group from acyl-phosphate (acyl-PO(4)) to glycerol-3-phosphate (G3P) to form lysophosphatidic acid (LPA). This enzyme utilizes acyl-phosphate as fatty acyl donor, but not acyl-CoA or acyl-ACP. The chain is Glycerol-3-phosphate acyltransferase from Legionella pneumophila (strain Corby).